Here is a 599-residue protein sequence, read N- to C-terminus: MSSSSSHNSFSGSKTNAAEGQNSIDGLSLKKTTSPFILTAYPSNEEKEVKETDIVPDENKVNELDVHKQSTEFSKQESASNDDDTNIQLIPENNMKIVVPALILTLFLAALDNTIVTTALPTIAEDFNDTSSSSWIGSAYVLASNAVLPAVGVFCNILGRKIVLYICIFFFMLGSALCGASQNMIWLIVCRAIQGLGGGGIISLVNIIISDITPLRTRPMYSGILATAWGAALVAGPIIGGAICQRTTWRWIFFINLPSGGIATALIVVFLHLLPCERTSFKKFLKTFDFIGLVCVITGIVLILLGISLGASSGKWRRANILCYLIIGGCLFVFAFIYDTFTKRNAVLPPPFFKNRSSAALLACSSFFYLNYMLFAYYVPQYFQRIRGDNPIMSGVHTIPCAAVLCFFCTTVGMVLRKLGRYLPLIYVGYISCVAGMGAMICVNATTSMSKVMGLTTIFMFGSGFLFLPPLIAMQATFPPAMTSMATATLMFIRTMGGSIGITVGEVIFNERVTQSFDGNTTYAQLSYKQVERLPQELQIRVKNTYASAFRVIWIFCTVVMAIGFASIFFIKSRPLISNAQSVPAKKKGDSDEKPAEKV.

Residues 1–13 show a composition bias toward low complexity; it reads MSSSSSHNSFSGS. 2 disordered regions span residues 1–27 and 41–86; these read MSSS…IDGL and YPSN…DDTN. Polar residues predominate over residues 14–27; that stretch reads KTNAAEGQNSIDGL. Basic and acidic residues predominate over residues 44 to 70; sequence NEEKEVKETDIVPDENKVNELDVHKQS. The next 14 membrane-spanning stretches (helical) occupy residues 97–117, 135–155, 162–182, 192–212, 223–243, 251–271, 290–310, 321–341, 359–379, 396–416, 423–443, 452–472, 489–509, and 552–572; these read IVVP…TIVT, WIGS…GVFC, IVLY…GASQ, AIQG…ISDI, GILA…GGAI, WIFF…VVFL, FIGL…ISLG, ILCY…YDTF, AALL…AYYV, VHTI…GMVL, LPLI…MICV, VMGL…PPLI, TLMF…EVIF, and VIWI…FFIK.

It belongs to the major facilitator superfamily. TCR/Tet family.

It localises to the membrane. This is an uncharacterized protein from Schizosaccharomyces pombe (strain 972 / ATCC 24843) (Fission yeast).